A 299-amino-acid chain; its full sequence is Probable lipid kinase YegS (299 aa).

Residues 2-133 (ANFPASLLIL…IDMARVNDKT (132 aa)) enclose the DAGKc domain. Residues Thr-40, 66–72 (GDGTINE), and Thr-95 contribute to the ATP site. Positions 215, 218, and 220 each coordinate Mg(2+). The Proton acceptor role is filled by Glu-271.

The protein belongs to the diacylglycerol/lipid kinase family. YegS lipid kinase subfamily. It depends on Mg(2+) as a cofactor. Requires Ca(2+) as cofactor.

Its subcellular location is the cytoplasm. In terms of biological role, probably phosphorylates lipids; the in vivo substrate is unknown. This chain is Probable lipid kinase YegS, found in Salmonella heidelberg (strain SL476).